The following is a 1028-amino-acid chain: Beta-galactosidase (1028 aa).

N104 and D203 together coordinate substrate. D203 contacts Na(+). Residues E418, H420, and E463 each coordinate Mg(2+). Substrate-binding positions include E463 and 539-542; that span reads EYAH. E463 serves as the catalytic Proton donor. Residue E539 is the Nucleophile of the active site. Residue N599 participates in Mg(2+) binding. Residues F603 and N606 each contribute to the Na(+) site. Substrate-binding residues include N606 and W1004.

The protein belongs to the glycosyl hydrolase 2 family. In terms of assembly, homodimer. Requires Mg(2+) as cofactor. Mn(2+) serves as cofactor. The cofactor is Fe cation. It depends on Na(+) as a cofactor. K(+) is required as a cofactor.

The enzyme catalyses Hydrolysis of terminal non-reducing beta-D-galactose residues in beta-D-galactosides.. With respect to regulation, completely inhibited by Hg(2+), Cu(2+) Ag(2+), and partially inhibited by Zn(2+), imidazole and EDTA. Activated by Ca(2+), Co(2+), Ni(2+). In terms of biological role, this beta-galactosidase is also able to catalyze glycosyl transfer to a series of acceptors, including hexose, pentose, beta- or alpha-disaccharides, hexahydroxy alcohol, cyclitol, and aromatic glycosides, resulting in the production of galacto-oligosaccharides (GOS). This chain is Beta-galactosidase (lacZ), found in Enterobacter agglomerans (Erwinia herbicola).